Here is a 602-residue protein sequence, read N- to C-terminus: Elongation factor 4 (602 aa).

The 182-residue stretch at 7 to 188 folds into the tr-type G domain; sequence ENIRNFSIIA…SIIRLVPPPK (182 aa). GTP is bound by residues 19-24 and 135-138; these read DHGKST and NKID.

Belongs to the TRAFAC class translation factor GTPase superfamily. Classic translation factor GTPase family. LepA subfamily.

The protein localises to the cell inner membrane. The enzyme catalyses GTP + H2O = GDP + phosphate + H(+). In terms of biological role, required for accurate and efficient protein synthesis under certain stress conditions. May act as a fidelity factor of the translation reaction, by catalyzing a one-codon backward translocation of tRNAs on improperly translocated ribosomes. Back-translocation proceeds from a post-translocation (POST) complex to a pre-translocation (PRE) complex, thus giving elongation factor G a second chance to translocate the tRNAs correctly. Binds to ribosomes in a GTP-dependent manner. This chain is Elongation factor 4, found in Chlamydia trachomatis serovar A (strain ATCC VR-571B / DSM 19440 / HAR-13).